The primary structure comprises 110 residues: UPF0060 membrane protein Bcen_0802 (110 aa).

A run of 4 helical transmembrane segments spans residues 9-29 (ALFAATALAEIVGCYLPWLVL), 34-54 (PAWLLVPAALSLALFAWLLTL), 66-86 (YGGVYIAVALIWLRVVDGVAL), and 88-108 (RWDVAGAVLALGGMAVIALQP).

This sequence belongs to the UPF0060 family.

The protein localises to the cell inner membrane. This is UPF0060 membrane protein Bcen_0802 from Burkholderia orbicola (strain AU 1054).